The primary structure comprises 108 residues: uncharacterized protein (108 aa).

The tract at residues 56–108 is disordered; the sequence is ELPSRGCLPAPRPESGQGRLSTGISQNGGRSSAQPCPRCIAGESGHFSHTKNH. The segment covering 73-89 has biased composition (polar residues); sequence GRLSTGISQNGGRSSAQ.

This is an uncharacterized protein from Homo sapiens (Human).